The primary structure comprises 1036 residues: Lethal(2) giant larvae protein homolog 1 (1036 aa).

WD repeat units lie at residues 38–71 (SALA…FTGL), 78–119 (VTQM…GLSF), 139–175 (VTVV…GQTL), 199–233 (SLQG…EHVF), 239–271 (LESL…GSPP), 289–331 (AINK…ETLV), 339–373 (VIDF…VLDL), 395–473 (TCSA…YKLS), 517–592 (QKVA…RMLI), and 601–662 (TAVT…LRQS). Residue serine 662 is modified to Phosphoserine. The segment covering 667 to 677 (RKSRVSGKKRT) has biased composition (basic residues). A disordered region spans residues 667–688 (RKSRVSGKKRTPAASSKLQEAN). The segment covering 679–688 (AASSKLQEAN) has biased composition (polar residues). WD repeat units lie at residues 722 to 782 (VRCL…KEVQ), 791 to 843 (AIAV…VSAK), 848 to 901 (LTAH…VHYS), and 915 to 938 (VFTR…SLSA). Threonine 957 carries the post-translational modification Phosphothreonine. Phosphoserine occurs at positions 964, 982, and 989. The disordered stretch occupies residues 980-1002 (PESCEGSPSSAHSKRADTMEPPE).

The protein belongs to the WD repeat L(2)GL family. Associated with nonmuscle myosin II heavy chain. Interacts with PRKCI/aPKC, PARD6B/Par-6 and PARD6A. Interacts with STX4A. Interacts with RAB10 (GDP-bound form); the interaction is direct and promotes RAB10 association with membranes and activation through competition with the Rab inhibitor GDI1. Interacts with DCAF1. In terms of processing, phosphorylated by PRKCI. Widely expressed. Expressed in brain, ovary, testis, with moderate expression in lever, uterus, lung and kidney.

Its subcellular location is the early endosome membrane. The protein localises to the golgi apparatus. The protein resides in the trans-Golgi network membrane. It localises to the cell projection. It is found in the axon. Its subcellular location is the golgi apparatus membrane. The protein localises to the cytoplasm. The protein resides in the cytoskeleton. Cortical cytoskeleton protein found in a complex involved in maintaining cell polarity and epithelial integrity. Involved in the regulation of mitotic spindle orientation, proliferation, differentiation and tissue organization of neuroepithelial cells. Involved in axonogenesis through RAB10 activation thereby regulating vesicular membrane trafficking toward the axonal plasma membrane. The polypeptide is Lethal(2) giant larvae protein homolog 1 (LLGL1) (Bos taurus (Bovine)).